The chain runs to 101 residues: Glutenin, high molecular weight subunit PC256 (101 aa).

The span at 1-27 (EKLGQGQQPRQWLQPRQGQQGYYPTSP) shows a compositional bias: polar residues. The tract at residues 1–65 (EKLGQGQQPR…QGYDSPYHVS (65 aa)) is disordered. Residues 41 to 62 (QGYYPTSPQQSGQGQQGYDSPY) are compositionally biased toward low complexity.

It belongs to the gliadin/glutenin family. In terms of assembly, disulfide-bridge linked aggregates.

In terms of biological role, glutenins are high-molecular weight seed storage proteins of wheat endosperm. Thought to be responsible for the visco-elastic property of wheat dough. This is Glutenin, high molecular weight subunit PC256 from Triticum aestivum (Wheat).